Consider the following 445-residue polypeptide: Proline--tRNA ligase (445 aa).

Belongs to the class-II aminoacyl-tRNA synthetase family. ProS type 2 subfamily. In terms of assembly, homodimer.

The protein localises to the cytoplasm. The catalysed reaction is tRNA(Pro) + L-proline + ATP = L-prolyl-tRNA(Pro) + AMP + diphosphate. Catalyzes the attachment of proline to tRNA(Pro) in a two-step reaction: proline is first activated by ATP to form Pro-AMP and then transferred to the acceptor end of tRNA(Pro). The sequence is that of Proline--tRNA ligase from Cereibacter sphaeroides (strain ATCC 17029 / ATH 2.4.9) (Rhodobacter sphaeroides).